A 285-amino-acid chain; its full sequence is Mitochondrial substrate carrier family protein L (285 aa).

The Mitochondrial intermembrane portion of the chain corresponds to 1-13 (MIASKETKEKIRN). Solcar repeat units follow at residues 8–94 (KEKI…VKSK), 103–185 (ISLG…AQRY), and 193–282 (MTMG…VMKF). The chain crosses the membrane as a helical span at residues 14–34 (FIGGFASGAASTLAGHPFDTL). Residues 35 to 69 (KVRLQTEGSTGRFRGLAHCFTTTIKEEGFFALYKG) lie on the Mitochondrial matrix side of the membrane. Residues 70–90 (VTPPLLGMSIINSCMFGAMNI) form a helical membrane-spanning segment. The Mitochondrial intermembrane portion of the chain corresponds to 91–102 (VKSKIHTDKSTP). The chain crosses the membrane as a helical span at residues 103–123 (ISLGEIMVSGAITGWIVSFVA). Topologically, residues 124-156 (CPIETVKSKLQVQYTGVKLYNGPIDCIKKIGIR) are mitochondrial matrix. The chain crosses the membrane as a helical span at residues 157–177 (GLYKALIPTGFQRNSLYAYFG). Topologically, residues 178–198 (CYELAQRYLRREDGSMTMGRS) are mitochondrial intermembrane. Residues 199–219 (FIAGGIAGTGFWLTNFPFDVI) traverse the membrane as a helical segment. Topologically, residues 220 to 256 (RSRIMTMPYNESPPRYKGMIDCAKHIYRVDGLKGFWK) are mitochondrial matrix. The helical transmembrane segment at 257-277 (GFSPCLLRTFPANGATFVAYE) threads the bilayer. At 278–285 (CVMKFFPM) the chain is on the mitochondrial intermembrane side.

Belongs to the mitochondrial carrier (TC 2.A.29) family.

It localises to the mitochondrion inner membrane. Its function is as follows. Mitochondrial solute carriers shuttle metabolites, nucleotides, and cofactors through the mitochondrial inner membrane. The protein is Mitochondrial substrate carrier family protein L (mcfL) of Dictyostelium discoideum (Social amoeba).